We begin with the raw amino-acid sequence, 153 residues long: MEKSILLINGPNLNLLGTREPHIYGSTTLSDVEESSKGHAASLGASLQTFQSNHEGAIVDRIHAARGNTDAIIINPGAYTHTSVAIRDALLGVEIPFIELHVSNVHAREPFRHHSYFSDKASGIIVGLGVYGYKVAVEHVALNFKPLEKKAAL.

The active-site Proton acceptor is Tyr-24. 3 residues coordinate substrate: Asn-75, His-81, and Asp-88. The active-site Proton donor is His-101. Substrate-binding positions include 102–103 and Arg-112; that span reads VS.

This sequence belongs to the type-II 3-dehydroquinase family. As to quaternary structure, homododecamer. Adopts a ring-like structure, composed of an arrangement of two hexameric rings stacked on top of one another.

It catalyses the reaction 3-dehydroquinate = 3-dehydroshikimate + H2O. Its pathway is aromatic compound metabolism; 3,4-dihydroxybenzoate biosynthesis; 3,4-dihydroxybenzoate from 3-dehydroquinate: step 1/2. Its function is as follows. Is involved in the catabolism of quinate. Allows the utilization of quinate as carbon source via the beta-ketoadipate pathway. This chain is Catabolic 3-dehydroquinase, found in Emericella nidulans (strain FGSC A4 / ATCC 38163 / CBS 112.46 / NRRL 194 / M139) (Aspergillus nidulans).